The sequence spans 807 residues: Tyrosine-protein phosphatase non-receptor type 22 (807 aa).

A Tyrosine-protein phosphatase domain is found at 24 to 289; it reads FANEFLKLKR…ELVYNAVLEL (266 aa). Ser35 carries the phosphoserine; by PKC/PRKCD modification. An intrachain disulfide couples Cys129 to Cys227. Catalysis depends on Cys227, which acts as the Phosphocysteine intermediate. Substrate contacts are provided by residues 227-233 and Gln274; that span reads CSAGCGR. Residues Ser449, Ser635, Ser684, and Ser692 each carry the phosphoserine modification. 2 disordered regions span residues 676 to 700 and 724 to 746; these read SVKL…LPER and SYPD…GKSF.

The protein belongs to the protein-tyrosine phosphatase family. Non-receptor class 4 subfamily. Interacts with CSK. Interacts with LPXN. Interacts with CBL. Interacts with TRAF3 (via MATH domain); the interaction promotes TRAF3 polyubiquitination. Post-translationally, phosphorylation on Ser-35 by PKC/PRKCD abrogates its ability to dephosphorylate and inactivate the SRC family kinases. As to expression, expressed in bone marrow, B and T-cells, PBMCs, natural killer cells, monocytes, dendritic cells and neutrophils. Both isoform 1 and 4 are predominantly expressed in lymphoid tissues and cells. Isoform 1 is expressed in thymocytes and both mature B and T-cells.

It localises to the cytoplasm. It carries out the reaction O-phospho-L-tyrosyl-[protein] + H2O = L-tyrosyl-[protein] + phosphate. It catalyses the reaction N-(5Z,8Z,11Z,14Z-eicosatetraenoyl)-ethanolamine phosphate + H2O = N-(5Z,8Z,11Z,14Z-eicosatetraenoyl)-ethanolamine + phosphate. Down-regulated by phosphorylation. Its function is as follows. Acts as a negative regulator of T-cell receptor (TCR) signaling by direct dephosphorylation of the Src family kinases LCK and FYN, ITAMs of the TCRz/CD3 complex, as well as ZAP70, VAV, VCP and other key signaling molecules. Associates with and probably dephosphorylates CBL. Dephosphorylates LCK at its activating 'Tyr-394' residue. Dephosphorylates ZAP70 at its activating 'Tyr-493' residue. Dephosphorylates the immune system activator SKAP2. Positively regulates toll-like receptor (TLR)-induced type 1 interferon production. Promotes host antiviral responses mediated by type 1 interferon. Regulates NOD2-induced pro-inflammatory cytokine secretion and autophagy. Acts as an activator of NLRP3 inflammasome assembly by mediating dephosphorylation of 'Tyr-861' of NLRP3. Dephosphorylates phospho-anandamide (p-AEA), an endocannabinoid to anandamide (also called N-arachidonoylethanolamide). This Homo sapiens (Human) protein is Tyrosine-protein phosphatase non-receptor type 22 (PTPN22).